We begin with the raw amino-acid sequence, 62 residues long: MLKCDICGKGPLAGYQYSHSHRKSIRKWKPNIKKVRAIVDGTPVRLHVCTKCLKAGKVQRAL.

This sequence belongs to the bacterial ribosomal protein bL28 family.

The polypeptide is Large ribosomal subunit protein bL28 (Thermoanaerobacter sp. (strain X514)).